Here is a 283-residue protein sequence, read N- to C-terminus: Elongation factor Ts (283 aa).

An involved in Mg(2+) ion dislocation from EF-Tu region spans residues 80–83 (TDFV).

The protein belongs to the EF-Ts family.

The protein localises to the cytoplasm. Associates with the EF-Tu.GDP complex and induces the exchange of GDP to GTP. It remains bound to the aminoacyl-tRNA.EF-Tu.GTP complex up to the GTP hydrolysis stage on the ribosome. This Shigella boydii serotype 18 (strain CDC 3083-94 / BS512) protein is Elongation factor Ts.